A 214-amino-acid polypeptide reads, in one-letter code: Adenylate kinase (214 aa).

Position 10-15 (10-15 (GAGKGT)) interacts with ATP. The NMP stretch occupies residues 30–59 (STGDMFRAAVKNETPLGLEAKSYMDKGHLV). AMP contacts are provided by residues T31, R36, 57–59 (HLV), 85–88 (GFPR), and Q92. Positions 126 to 163 (GRWICPVCGASYHTMFNPPKEAGVCDKDGGKLYQREDD) are LID. R127 is a binding site for ATP. C130 and C133 together coordinate Zn(2+). An ATP-binding site is contributed by 136-137 (SY). Zn(2+) contacts are provided by C150 and D153. R160 and R171 together coordinate AMP. Q199 is an ATP binding site.

This sequence belongs to the adenylate kinase family. In terms of assembly, monomer.

The protein resides in the cytoplasm. It catalyses the reaction AMP + ATP = 2 ADP. It functions in the pathway purine metabolism; AMP biosynthesis via salvage pathway; AMP from ADP: step 1/1. In terms of biological role, catalyzes the reversible transfer of the terminal phosphate group between ATP and AMP. Plays an important role in cellular energy homeostasis and in adenine nucleotide metabolism. This Brevibacillus brevis (strain 47 / JCM 6285 / NBRC 100599) protein is Adenylate kinase.